The sequence spans 466 residues: Cysteine--tRNA ligase (466 aa).

Residue Cys-28 participates in Zn(2+) binding. The 'HIGH' region motif lies at 30–40; the sequence is PTVYNYIHIGN. The Zn(2+) site is built by Cys-208, His-233, and Glu-237. Residues 265 to 269 carry the 'KMSKS' region motif; sequence KMSKS. Residue Lys-268 participates in ATP binding.

The protein belongs to the class-I aminoacyl-tRNA synthetase family. As to quaternary structure, monomer. It depends on Zn(2+) as a cofactor.

The protein resides in the cytoplasm. It catalyses the reaction tRNA(Cys) + L-cysteine + ATP = L-cysteinyl-tRNA(Cys) + AMP + diphosphate. This chain is Cysteine--tRNA ligase, found in Staphylococcus haemolyticus (strain JCSC1435).